We begin with the raw amino-acid sequence, 62 residues long: MSQNLFQILLIFAILAALQVQGFLFPTYSSGYDYDCYGYGNGYGNGYGNGYGYGNGYGYGGY.

Residues methionine 1–glycine 22 form the signal peptide.

The chain is Fungus-induced protein 1 from Caenorhabditis briggsae.